We begin with the raw amino-acid sequence, 259 residues long: 2-oxoglutaramate amidase (259 aa).

Positions 3–238 (WTISCLQFDI…EGIVRAEIDL (236 aa)) constitute a CN hydrolase domain. Glu42 acts as the Proton acceptor in catalysis. Lys111 acts as the Proton donor in catalysis. Cys145 acts as the Nucleophile in catalysis.

Belongs to the carbon-nitrogen hydrolase superfamily. NIT1/NIT2 family.

The enzyme catalyses 2-oxoglutaramate + H2O = 2-oxoglutarate + NH4(+). Its function is as follows. Involved in the methylthioribose (MTR) recycling pathway. Probably catalyzes the conversion of 2-oxoglutaramate to 2-oxoglutarate. This Bacillus subtilis (strain 168) protein is 2-oxoglutaramate amidase.